A 137-amino-acid polypeptide reads, in one-letter code: Large ribosomal subunit protein bL12 (137 aa).

It belongs to the bacterial ribosomal protein bL12 family. In terms of assembly, homodimer. Part of the ribosomal stalk of the 50S ribosomal subunit. Forms a multimeric L10(L12)X complex, where L10 forms an elongated spine to which 2 to 4 L12 dimers bind in a sequential fashion. Binds GTP-bound translation factors.

In terms of biological role, forms part of the ribosomal stalk which helps the ribosome interact with GTP-bound translation factors. Is thus essential for accurate translation. The sequence is that of Large ribosomal subunit protein bL12 from Gloeobacter violaceus (strain ATCC 29082 / PCC 7421).